A 550-amino-acid polypeptide reads, in one-letter code: Kinase suppressor of Ras B (550 aa).

Low complexity-rich tracts occupy residues S21 to I56 and A63 to S75. The disordered stretch occupies residues S21–I87. A Phorbol-ester/DAG-type zinc finger spans residues Y90–C145. The disordered stretch occupies residues T172–G196. The span at S177–S193 shows a compositional bias: low complexity. Residues V248 to V528 form the Protein kinase domain. Residues M530–F550 form a disordered region.

The protein belongs to the protein kinase superfamily. TKL Ser/Thr protein kinase family. In terms of assembly, interacts with ndk-1.

Functionally, probable inactive protein kinase which positively regulates Ras-mediated signaling probably acting at the level of let-60/ras or/and lin-45/raf. In the germline, regulates meiotic progression during oogenesis and mpk-1 (isoform b) phosphorylation. Plays a role in meiotic recombination events. Functions redundantly with ksr-1 in the Ras-mediated regulation of larval survival, the development of excretory canal, in determining vulval precursor cell fate during vulval induction and in mpk-1 phosphorylation in somatic cells. In Caenorhabditis elegans, this protein is Kinase suppressor of Ras B.